We begin with the raw amino-acid sequence, 435 residues long: Casein kinase I homolog 2 (435 aa).

Positions 12 to 282 constitute a Protein kinase domain; sequence YRVGRKIGEG…FLQELFDDVL (271 aa). ATP-binding positions include 18–26 and K41; that span reads IGEGSFGVI. D131 (proton acceptor) is an active-site residue. S361 is modified (phosphoserine).

Belongs to the protein kinase superfamily. CK1 Ser/Thr protein kinase family. Casein kinase I subfamily.

It localises to the cytoplasm. The enzyme catalyses L-seryl-[protein] + ATP = O-phospho-L-seryl-[protein] + ADP + H(+). The catalysed reaction is L-threonyl-[protein] + ATP = O-phospho-L-threonyl-[protein] + ADP + H(+). Functionally, casein kinases are operationally defined by their preferential utilization of acidic proteins such as caseins as substrates. May contribute to the regulation of morphology. This chain is Casein kinase I homolog 2 (cki2), found in Schizosaccharomyces pombe (strain 972 / ATCC 24843) (Fission yeast).